A 98-amino-acid polypeptide reads, in one-letter code: Small ribosomal subunit protein uS19c (98 aa).

This sequence belongs to the universal ribosomal protein uS19 family.

It is found in the plastid. The protein localises to the chloroplast. Protein S19 forms a complex with S13 that binds strongly to the 16S ribosomal RNA. The polypeptide is Small ribosomal subunit protein uS19c (Jasminum nudiflorum (Winter jasmine)).